Here is a 208-residue protein sequence, read N- to C-terminus: Uracil phosphoribosyltransferase (208 aa).

5-phospho-alpha-D-ribose 1-diphosphate contacts are provided by residues R78, R103, and 130–138 (DPMLATGGS). Residues I193 and 198–200 (GDA) each bind uracil. Residue D199 participates in 5-phospho-alpha-D-ribose 1-diphosphate binding.

This sequence belongs to the UPRTase family. It depends on Mg(2+) as a cofactor.

It catalyses the reaction UMP + diphosphate = 5-phospho-alpha-D-ribose 1-diphosphate + uracil. The protein operates within pyrimidine metabolism; UMP biosynthesis via salvage pathway; UMP from uracil: step 1/1. With respect to regulation, allosterically activated by GTP. Catalyzes the conversion of uracil and 5-phospho-alpha-D-ribose 1-diphosphate (PRPP) to UMP and diphosphate. This Actinobacillus succinogenes (strain ATCC 55618 / DSM 22257 / CCUG 43843 / 130Z) protein is Uracil phosphoribosyltransferase.